Here is a 404-residue protein sequence, read N- to C-terminus: N-acetylglucosamine-6-phosphate deacetylase (404 aa).

Glutamate 143 serves as a coordination point for a divalent metal cation. Residue alanine 154–histidine 155 coordinates substrate. A divalent metal cation is bound by residues histidine 211 and histidine 232. Substrate contacts are provided by residues asparagine 235 to alanine 236, arginine 243, and aspartate 269 to histidine 272. Aspartate 294 functions as the Proton donor/acceptor in the catalytic mechanism. Residue leucine 328–glycine 330 participates in substrate binding.

It belongs to the metallo-dependent hydrolases superfamily. NagA family. It depends on a divalent metal cation as a cofactor.

The enzyme catalyses N-acetyl-D-glucosamine 6-phosphate + H2O = D-glucosamine 6-phosphate + acetate. Its pathway is amino-sugar metabolism; N-acetylneuraminate degradation. Functionally, hydrolyzes the N-glycolyl group from N-glycolylglucosamine 6-phosphate (GlcNGc-6-P) in the N-glycolylneuraminic acid (Neu5Gc) degradation pathway. The protein is N-acetylglucosamine-6-phosphate deacetylase (amdhd2) of Danio rerio (Zebrafish).